The following is a 955-amino-acid chain: 2-oxoglutarate dehydrogenase E1 component (955 aa).

It belongs to the alpha-ketoglutarate dehydrogenase family. Homodimer. Part of the 2-oxoglutarate dehydrogenase (OGDH) complex composed of E1 (2-oxoglutarate dehydrogenase), E2 (dihydrolipoamide succinyltransferase) and E3 (dihydrolipoamide dehydrogenase); the complex contains multiple copies of the three enzymatic components (E1, E2 and E3). Thiamine diphosphate is required as a cofactor.

The enzyme catalyses N(6)-[(R)-lipoyl]-L-lysyl-[protein] + 2-oxoglutarate + H(+) = N(6)-[(R)-S(8)-succinyldihydrolipoyl]-L-lysyl-[protein] + CO2. E1 component of the 2-oxoglutarate dehydrogenase (OGDH) complex which catalyzes the decarboxylation of 2-oxoglutarate, the first step in the conversion of 2-oxoglutarate to succinyl-CoA and CO(2). The chain is 2-oxoglutarate dehydrogenase E1 component from Bacillus cereus (strain AH820).